Here is a 203-residue protein sequence, read N- to C-terminus: Transcriptional regulator GfcR (203 aa).

It belongs to the purine/pyrimidine phosphoribosyltransferase family. GfcR subfamily.

The protein is Transcriptional regulator GfcR of Methanococcoides burtonii (strain DSM 6242 / NBRC 107633 / OCM 468 / ACE-M).